We begin with the raw amino-acid sequence, 183 residues long: Translation initiation factor IF-3 (183 aa).

It belongs to the IF-3 family. In terms of assembly, monomer.

The protein localises to the cytoplasm. IF-3 binds to the 30S ribosomal subunit and shifts the equilibrium between 70S ribosomes and their 50S and 30S subunits in favor of the free subunits, thus enhancing the availability of 30S subunits on which protein synthesis initiation begins. The chain is Translation initiation factor IF-3 from Yersinia enterocolitica serotype O:8 / biotype 1B (strain NCTC 13174 / 8081).